The chain runs to 282 residues: Parvulin-like PPIase (282 aa).

The signal sequence occupies residues 1–20 (MKKLSVIFLSVSMLSSIAFG). The PpiC domain occupies 138–231 (KEQIKVAHIL…FGWHIIKVLE (94 aa)).

The protein belongs to the PpiC/parvulin rotamase family.

It is found in the cell outer membrane. The enzyme catalyses [protein]-peptidylproline (omega=180) = [protein]-peptidylproline (omega=0). In Rickettsia prowazekii (strain Madrid E), this protein is Parvulin-like PPIase (plp).